A 116-amino-acid chain; its full sequence is Large ribosomal subunit protein bL19 (116 aa).

This sequence belongs to the bacterial ribosomal protein bL19 family.

This protein is located at the 30S-50S ribosomal subunit interface and may play a role in the structure and function of the aminoacyl-tRNA binding site. This Shewanella loihica (strain ATCC BAA-1088 / PV-4) protein is Large ribosomal subunit protein bL19.